Consider the following 35-residue polypeptide: MQVNNLGFIASILFVLVPTVFLLILFIQTRQETEG.

A helical membrane pass occupies residues 7-27 (GFIASILFVLVPTVFLLILFI).

The protein belongs to the PsbM family. In terms of assembly, PSII is composed of 1 copy each of membrane proteins PsbA, PsbB, PsbC, PsbD, PsbE, PsbF, PsbH, PsbI, PsbJ, PsbK, PsbL, PsbM, PsbT, PsbX, PsbY, PsbZ, Psb30/Ycf12, peripheral proteins PsbO, CyanoQ (PsbQ), PsbU, PsbV and a large number of cofactors. It forms dimeric complexes.

It is found in the cellular thylakoid membrane. In terms of biological role, one of the components of the core complex of photosystem II (PSII). PSII is a light-driven water:plastoquinone oxidoreductase that uses light energy to abstract electrons from H(2)O, generating O(2) and a proton gradient subsequently used for ATP formation. It consists of a core antenna complex that captures photons, and an electron transfer chain that converts photonic excitation into a charge separation. This subunit is found at the monomer-monomer interface. In Microcystis aeruginosa (strain NIES-843 / IAM M-2473), this protein is Photosystem II reaction center protein M.